The sequence spans 477 residues: Oxidative stress-induced growth inhibitor 1 (477 aa).

S12 carries the phosphoserine modification.

It belongs to the OKL38 family. The cofactor is NADPH. Ubiquitous. Highest expression in the ovary, testis, kidney, skeletal muscle and liver.

It is found in the midbody. In terms of biological role, monooxygenase catalytic activity. Involved in regulation of cytokinesis; promotes RHOA activity, probably acting locally at the midbody in late cytokinesis. Monooxygenase activity is involved in stabilizing transient structures between daughter cells, termed intercellular bridges, before abscission. Regulates differentiation and proliferation through the regulation of cell death. This Homo sapiens (Human) protein is Oxidative stress-induced growth inhibitor 1.